A 168-amino-acid polypeptide reads, in one-letter code: Skp-like protein (168 aa).

A signal peptide spans 1–22; the sequence is MRKFTQFVLITAAIMAAPSAFA.

The protein belongs to the Skp family.

The sequence is that of Skp-like protein from Pseudomonas aeruginosa (strain ATCC 15692 / DSM 22644 / CIP 104116 / JCM 14847 / LMG 12228 / 1C / PRS 101 / PAO1).